The chain runs to 208 residues: Large ribosomal subunit protein uL4 (208 aa).

The tract at residues 45–78 is disordered; that stretch reads RQGTAKSKERSEMSGSTRKLGRQKGSGGARRGDI.

This sequence belongs to the universal ribosomal protein uL4 family. As to quaternary structure, part of the 50S ribosomal subunit.

In terms of biological role, one of the primary rRNA binding proteins, this protein initially binds near the 5'-end of the 23S rRNA. It is important during the early stages of 50S assembly. It makes multiple contacts with different domains of the 23S rRNA in the assembled 50S subunit and ribosome. Its function is as follows. Forms part of the polypeptide exit tunnel. This chain is Large ribosomal subunit protein uL4, found in Azobacteroides pseudotrichonymphae genomovar. CFP2.